We begin with the raw amino-acid sequence, 287 residues long: Hydroxysteroid 11-beta-dehydrogenase 1-like protein (287 aa).

The signal sequence occupies residues 1–20 (MMKPFGKVLCAAGSLAVLLA). NADP(+) is bound by residues 41-67 (GASAGIGEQMAYHYATFGAEIVLTARR), 92-93 (DM), and 119-121 (NHI). Ser170 contributes to the substrate binding site. The active-site Proton acceptor is Tyr183. NADP(+)-binding positions include 183 to 187 (YSATK) and 216 to 222 (GLIDTDA).

Belongs to the short-chain dehydrogenases/reductases (SDR) family.

It localises to the secreted. It catalyses the reaction cortisone + NADPH + H(+) = cortisol + NADP(+). Its function is as follows. Unidirectional NADP(+)-dependent cortisol dehydrogenase (in vitro). This chain is Hydroxysteroid 11-beta-dehydrogenase 1-like protein (HSD11B1L), found in Gallus gallus (Chicken).